The chain runs to 156 residues: Cytochrome c-type biogenesis protein CcmE (156 aa).

The Cytoplasmic segment spans residues 1-7 (MTRRQRR). Residues 8–28 (LGILLAALVCAGAATALTLNA) form a helical; Signal-anchor for type II membrane protein membrane-spanning segment. Topologically, residues 29–156 (FRSNLVFFFS…AKESARSASR (128 aa)) are periplasmic. Heme is bound by residues His-123 and Tyr-127.

Belongs to the CcmE/CycJ family.

The protein resides in the cell inner membrane. Heme chaperone required for the biogenesis of c-type cytochromes. Transiently binds heme delivered by CcmC and transfers the heme to apo-cytochromes in a process facilitated by CcmF and CcmH. This chain is Cytochrome c-type biogenesis protein CcmE, found in Ralstonia pickettii (strain 12J).